Here is a 109-residue protein sequence, read N- to C-terminus: Archaeosine synthase (109 aa).

Cys21 (thioimide intermediate) is an active-site residue. Asp28 serves as the catalytic Proton donor/acceptor. Substrate contacts are provided by residues Asp28, 43-46 (LAIE), and 62-63 (HE).

The protein belongs to the archaeosine synthase type 2 family. In terms of assembly, forms a symmetric tunnel-fold (T-fold) homodecamer of two head-to-head facing pentameric subunits, with 10 active sites at the intermonomer interfaces.

It catalyses the reaction 7-cyano-7-carbaguanosine(15) in tRNA + NH4(+) = archaeosine(15) in tRNA. It participates in tRNA modification; archaeosine-tRNA biosynthesis. In terms of biological role, is responsible for the final step in the biosynthesis of archaeosine, a modified nucleoside present in the dihydrouridine loop (D-loop) of archaeal tRNA. Catalyzes the conversion of 7-cyano-7-deazaguanine (preQ0)-modified tRNA to archaeosine-tRNA, transforming a nitrile group to a formamidine group. Can use neither glutamine nor asparagine as amino donor in vitro, is only able to utilize free ammonium. However, the enzyme might function in vivo with a partner that serves to generate ammonium. The chain is Archaeosine synthase from Pyrobaculum calidifontis (strain DSM 21063 / JCM 11548 / VA1).